The following is a 158-amino-acid chain: Low molecular weight phosphotyrosine protein phosphatase (158 aa).

An N-acetylalanine modification is found at Ala-2. Catalysis depends on Cys-13, which acts as the Nucleophile. Residue Arg-19 is part of the active site. The active-site Proton donor is the Asp-130. Phosphotyrosine is present on residues Tyr-132 and Tyr-133.

It belongs to the low molecular weight phosphotyrosine protein phosphatase family. As to quaternary structure, interacts with EPHA2; dephosphorylates EPHA2. Interacts with EPHB1. In terms of assembly, interacts with the SH3 domain of SPTAN1. There is no interaction observed for isoforms 2 or 3. Phosphorylated by LCK. Phosphorylation at Tyr-132 increases its phosphatase activity. Post-translationally, not phosphorylated. As to expression, expressed in T-lymphocytes.

The protein localises to the cytoplasm. The catalysed reaction is O-phospho-L-tyrosyl-[protein] + H2O = L-tyrosyl-[protein] + phosphate. The enzyme catalyses a phosphate monoester + H2O = an alcohol + phosphate. Inhibited by sulfhydryl reagents. Acts on tyrosine phosphorylated proteins, low-MW aryl phosphates and natural and synthetic acyl phosphates with differences in substrate specificity between isoform 1 and isoform 2. Functionally, does not possess phosphatase activity. The chain is Low molecular weight phosphotyrosine protein phosphatase from Homo sapiens (Human).